The primary structure comprises 209 residues: Ferritin heavy chain (209 aa).

Positions 1 to 27 (MMKSVFFGVVAITVAILSIYQETAQAQ) are cleaved as a signal peptide. The Ferritin-like diiron domain maps to 40-193 (DSVDDQCLAA…EKIATLKKMK (154 aa)). The Fe cation site is built by Glu57, Glu92, His95, Glu140, and Gln175.

The protein belongs to the ferritin family. In terms of assembly, oligomer of 24 subunits. There are two types of subunits: L (light) chain and H (heavy) chain. The functional molecule forms a roughly spherical shell with a diameter of 12 nm and contains a central cavity into which the insoluble mineral iron core is deposited.

It localises to the secreted. The protein localises to the cytoplasm. The catalysed reaction is 4 Fe(2+) + O2 + 4 H(+) = 4 Fe(3+) + 2 H2O. Its function is as follows. Stores iron in a soluble, non-toxic, readily available form. Important for iron homeostasis. Has ferroxidase activity. Iron is taken up in the ferrous form and deposited as ferric hydroxides after oxidation. This is Ferritin heavy chain (FERH) from Aedes aegypti (Yellowfever mosquito).